The chain runs to 884 residues: MVYFRQIFLMIIVVSLHCCKVRFFCIVANAKELDDWKVLTVENGERYRTHVGRYAGEEGGEKIKLRVLEKFRALLDLIKPSTSRRRNLAESASFSPWPAPSPSPFPNGGPIESPAYPPAPPRPIPPHLRRPLPQRTHPLEQPEIQRRKHEKGGTFKKILVPVVASTASAIGFVVCVVGVFCLCARRKRKMNGKTLSFKRKKGKSQSSTRKVSVNPTLDFLYLNSLGVDLERQNSVSVKEIRETEKDLNGINGGLLEEEVKRSIETEISHDWDNASSYSTKEIVSVHENDEEQTVNSVSVPVVVINDSSDDDESFHSVGGGSQYSNPRLSNASSASGSVNVGSSQRFSEHKLDIPECSRSDFGISVSAPPPPPPPPPPLPQFSNKRIHTLSSPETANLQTLSSQLCEKLCASSSKTSFPINVPNSQPRPPPPPPPPQQLQVAGINKTPPPPLSLDFSERRPLGKDGAPLPKLKPLHWDKVRATPDRTMVWDKLRTSSFELDEEMIESLFGYTMQSSTKNEEGKSKTPSPGKHLLEPKRLQNFTILLKALNATADQICSALGKGEGLCLQQLEALVKMVPTKEEELKLRSYKGAVDELGSAEKFLRALVGVPFAFQRAEAMLYRETFEDEVVHLRNSFSMLEEACKELKSSRLFLKLLEAVLKTGNRMNVGTIRGGAKAFKLDALLKLSDVKGTDGKTTLLHFVVQEISRSEGIRVSDSIMGRIMNQRSNKNRTPEEKEEDYRRMGLDLVSGLNTELRNVKKTATIDLEGLVTSVSNLRDGLGQLSCLASEKLKGDEENRAFVSSMSSFLRYGEKSLEELREDEKRIMERVGEIAEYFHGDVRGDEKNPLRIFVIVRDFLGMLDHVCRELRCVRVPNSPSPLAPFR.

The signal sequence occupies residues Met1–Cys18. The segment at Ala89 to Glu143 is disordered. Composition is skewed to pro residues over residues Trp97 to Asn107 and Ala115 to Pro126. Residues Ile158–Gly178 traverse the membrane as a helical segment. 3 disordered regions span residues Ser307–Lys384, Ser416–Pro469, and Met512–Leu532. Residues Ser329 to Ser343 show a composition bias toward low complexity. Residues Phe346 to Arg358 show a composition bias toward basic and acidic residues. 2 stretches are compositionally biased toward pro residues: residues Ala367–Pro379 and Gln425–Gln436. An FH2 domain is found at Leu461 to Arg884.

This sequence belongs to the formin-like family. Class-I subfamily.

It is found in the membrane. In terms of biological role, might be involved in the organization and polarity of the actin cytoskeleton. The sequence is that of Formin-like protein 11 (FH11) from Arabidopsis thaliana (Mouse-ear cress).